Here is a 279-residue protein sequence, read N- to C-terminus: MNYLPAPPPGTTPLRVLSIAGSDSGGGAGIQADMRTMTVLGVHACTAVTAVTIQNTLGVEGFHEIPAEIVASQIKAVVTDIGIQSAKTGMLASSSIIAAVAETWLRLELTTPLVVDPVCASMHGDPLLTGEAMDSLRDRLFPLATVVTPNLDEVRLLVGIDVVDTESQRAAAMALHALGPQWALVKGGHLRSSDRSCDLLYGGSSAGVAFHEFDAPRVQTGNDHGGGDTLAAAVSCALAHGYTVPDAVGFGKRWVTECLRDAYPLGRGHGPVSPLFQRT.

Residue Q54 coordinates 4-amino-5-hydroxymethyl-2-methylpyrimidine.

Belongs to the ThiD family.

It catalyses the reaction 4-amino-5-hydroxymethyl-2-methylpyrimidine + ATP = 4-amino-2-methyl-5-(phosphooxymethyl)pyrimidine + ADP + H(+). It carries out the reaction 4-amino-2-methyl-5-(phosphooxymethyl)pyrimidine + ATP = 4-amino-2-methyl-5-(diphosphooxymethyl)pyrimidine + ADP. It functions in the pathway cofactor biosynthesis; thiamine diphosphate biosynthesis; 4-amino-2-methyl-5-diphosphomethylpyrimidine from 5-amino-1-(5-phospho-D-ribosyl)imidazole: step 2/3. The protein operates within cofactor biosynthesis; thiamine diphosphate biosynthesis; 4-amino-2-methyl-5-diphosphomethylpyrimidine from 5-amino-1-(5-phospho-D-ribosyl)imidazole: step 3/3. Catalyzes the phosphorylation of hydroxymethylpyrimidine phosphate (HMP-P) to HMP-PP, and of HMP to HMP-P. The polypeptide is Hydroxymethylpyrimidine/phosphomethylpyrimidine kinase (thiD) (Mycobacterium leprae (strain TN)).